The following is a 392-amino-acid chain: tRNA (guanine-N(7)-)-methyltransferase (392 aa).

S-adenosyl-L-methionine-binding residues include Glu-123, Glu-148, and Asp-175. Substrate-binding residues include Lys-201 and Asp-231.

The protein belongs to the class I-like SAM-binding methyltransferase superfamily. TrmB family.

It catalyses the reaction guanosine(46) in tRNA + S-adenosyl-L-methionine = N(7)-methylguanosine(46) in tRNA + S-adenosyl-L-homocysteine. Its pathway is tRNA modification; N(7)-methylguanine-tRNA biosynthesis. Its function is as follows. Catalyzes the formation of N(7)-methylguanine at position 46 (m7G46) in tRNA. This Campylobacter jejuni subsp. doylei (strain ATCC BAA-1458 / RM4099 / 269.97) protein is tRNA (guanine-N(7)-)-methyltransferase.